The following is a 66-amino-acid chain: Large ribosomal subunit protein uL29 (66 aa).

It belongs to the universal ribosomal protein uL29 family. Part of the 50S ribosomal subunit.

The polypeptide is Large ribosomal subunit protein uL29 (rpmC) (Bacillus subtilis (strain 168)).